The sequence spans 609 residues: MEPNVVEIATPPAASCSRIRTPTKAETPEVIDVEEYDLQNGGVPNGNNVDYKNKGKAIDFDSMSYGDYGEEDEYAVGSPGDDYGYPESSPLSNSLLDPESLIYEDDENYSEQYDFEMEAEPDNYSMYQDLFDGKDIPTGVEVSMDWFPNSADKESASSSKSSHANNGNNSSKKATKASGIHSQFSSDMETPVAQPWNALPHKAEGVIPNSAYALPQNSKAFQPPYAVHYSALKTAFSNYLQPQTPDTVLGEAPAPAAGSSGLLPPNTPGFKSNAARFKEEPPILPPDDSRVKRNMEDYLGLYLFFKRFDIVEDFSDHHYASKGTTSKQHSKDWAKRIQDEWRILEKDLPEMIFVRAYESRMDLLRAVIIGAQGTPYHDGLFFFDIFFPDTYPSTPPIVHYHSGGLRINPNLYNCGKVCLSLLGTWSGNQREKWIPNTSTMLQVLVSIQGLILNQKPYFNEPGYERSAGSAHGESTSKAYSENTFILSLKTMVYTMRRPPKYFEDFAYGHFFSCAHDVLKACNAYRNGATPGYLVKGAPDVEENSAGMSSLKFRTDVATFVETVLLKEFILLGVLGLEPEEEEKTPETIIVAESSKCTRSRSKRDRVSSS.

2 disordered regions span residues 70-99 (EEDEYAVGSPGDDYGYPESSPLSNSLLDPE) and 151-185 (ADKESASSSKSSHANNGNNSSKKATKASGIHSQFS). The segment covering 156–178 (ASSSKSSHANNGNNSSKKATKAS) has biased composition (low complexity). A UBC core domain is found at 332 to 492 (DWAKRIQDEW…TFILSLKTMV (161 aa)). Cys-418 functions as the Glycyl thioester intermediate in the catalytic mechanism.

It belongs to the ubiquitin-conjugating enzyme family. As to expression, expressed in seeds, pistils, siliques, hypocotyls and leaves.

The enzyme catalyses S-ubiquitinyl-[E1 ubiquitin-activating enzyme]-L-cysteine + [E2 ubiquitin-conjugating enzyme]-L-cysteine = [E1 ubiquitin-activating enzyme]-L-cysteine + S-ubiquitinyl-[E2 ubiquitin-conjugating enzyme]-L-cysteine.. Its pathway is protein modification; protein ubiquitination. Functionally, accepts the ubiquitin from the E1 complex and catalyzes its covalent attachment to other proteins. In Arabidopsis thaliana (Mouse-ear cress), this protein is Probable ubiquitin-conjugating enzyme E2 25 (UBC25).